Here is a 92-residue protein sequence, read N- to C-terminus: Small ribosomal subunit protein uS17 (92 aa).

Belongs to the universal ribosomal protein uS17 family. As to quaternary structure, part of the 30S ribosomal subunit.

Its function is as follows. One of the primary rRNA binding proteins, it binds specifically to the 5'-end of 16S ribosomal RNA. This chain is Small ribosomal subunit protein uS17, found in Cupriavidus pinatubonensis (strain JMP 134 / LMG 1197) (Cupriavidus necator (strain JMP 134)).